The sequence spans 263 residues: MEAHLDWYGVPGLQEASDACPRESCSSALPEAREGANVHFPPHPVPREHFSCAAPELVAGAQGLNASLMDGGALPRLMPTSSGVAGACAARRRQASPELLRCSRRRRSGATEASSSSAAVARRNERERNRVKLVNLGFQALRQHVPHGGANKKLSKVETLRSAVEYIRALQRLLAEHDAVRAALAGGLLTPATPPSDECAQPSASPASASLSCASTSPSPDRLGCSEPTSPRSAYSSEESSCEGELSPMEQELLDFSSWLGGY.

Disordered stretches follow at residues 104-126 (RRRR…RNER) and 194-248 (PPSD…ELSP). Low complexity-rich tracts occupy residues 110-121 (ATEASSSSAAVA), 202-220 (PSAS…SPSP), and 230-247 (SPRS…GELS). Residues 118–170 (AAVARRNERERNRVKLVNLGFQALRQHVPHGGANKKLSKVETLRSAVEYIRAL) enclose the bHLH domain.

In terms of assembly, efficient DNA binding requires dimerization with another basic helix-loop-helix (bHLH) protein. Forms heterodimers with bHLH transcription factor TCF3. May not heterodimerise with bHLH protein HAND1. Expressed in follicular T-helper (Tfh) cells.

It is found in the nucleus. Transcription factor. Binds to E-box motifs 5'-CANNTG-3' in the regulatory elements of target genes, probably as a heterodimer with another basic helix-loop-helix (bHLH) protein such as the transcription factor TCF3. May bind both open and closed chromatin, acting as a pioneer transcription factor to allow other factors to bind and activate lineage-specific genes. Required during post-implantation development for the generation of some differentiated trophoblast cell types. Transcriptional activity of ASCL2 may be antagonised in a subset of trophoblast cells by bHLH transcription factor HAND1, perhaps by competing for dimerization with other bHLH proteins. Involved in differentiation and function of follicular T-helper (Tfh) cells, thereby playing a role in germinal center responses; probably modulates expression of genes involved in Tfh cell function, such as BCL6. May also act as a suppressor of Th1-, Th2- and Th17-cell differentiation. Induces the formation of stem cells in intestinal crypts in vitro, synergistically activating transcription of target genes, such as SOX9, together with TCF4/beta-catenin. May form a bistable transcriptional switch, controlling expression of its own gene together with Wnt/R-spondin signaling, and thereby maintaining stem cell characteristics. Modulates expression of target genes, including perhaps down-regulating EGR1/Krox24 and chemokine CXCL10/Mob-1 and up-regulating CXCR4 and CDKN1C/p57kip2, in Schwann cells. May play a role in reducing proliferation of Schwann cells, perhaps acting via modulation of expression of CDKN1C. May be dispensable for blastocyst formation and later embryonic function. May be involved in the determination of neuronal precursors. In Mus musculus (Mouse), this protein is Achaete-scute homolog 2 (Ascl2).